The chain runs to 223 residues: Cytidylate kinase (223 aa).

12 to 20 (GPSGVGKGT) is an ATP binding site.

This sequence belongs to the cytidylate kinase family. Type 1 subfamily.

Its subcellular location is the cytoplasm. The catalysed reaction is CMP + ATP = CDP + ADP. The enzyme catalyses dCMP + ATP = dCDP + ADP. This chain is Cytidylate kinase, found in Xylella fastidiosa (strain M12).